The sequence spans 852 residues: Patatin-like phospholipase domain-containing protein CaO19.1504 (852 aa).

Positions 41–52 are enriched in low complexity; it reads ATTDITTTPIND. The tract at residues 41-184 is disordered; the sequence is ATTDITTTPI…KKTTPTSSTS (144 aa). Polar residues predominate over residues 75 to 95; it reads INGTVSDSSSITDEDIMNSSY. Low complexity predominate over residues 101 to 110; sequence SSTNLKSNST. The span at 113 to 122 shows a compositional bias: acidic residues; sequence DDDDDDDDDD. Composition is skewed to low complexity over residues 129 to 142 and 158 to 171; these read SGTT…SLSS and GGSR…KGSS. Residues 207–227 traverse the membrane as a helical segment; it reads WPILIFVFSWIGILGIFYFMI. The region spanning 396-588 is the PNPLA domain; sequence LCLSGGACFA…RTDIPIEALN (193 aa). Positions 427-431 match the GXSXG motif; it reads GTSGG. Ser-429 acts as the Nucleophile in catalysis. Asp-575 acts as the Proton acceptor in catalysis. Residues 800–840 form a disordered region; the sequence is KKLLDELDNEDEEEDEEEEEVDVDDDDDDDDDSLSDSFEIT. Residues 805–833 show a composition bias toward acidic residues; it reads ELDNEDEEEDEEEEEVDVDDDDDDDDDSL.

It belongs to the PLPL family.

The protein localises to the membrane. Probable lipid hydrolase. This is Patatin-like phospholipase domain-containing protein CaO19.1504 from Candida albicans (strain SC5314 / ATCC MYA-2876) (Yeast).